Here is a 106-residue protein sequence, read N- to C-terminus: Adipokinetic hormone/corazonin-related peptide (106 aa).

Residues 1–25 form the signal peptide; sequence MRNSIYKLIMFAVLCMVLTSSLSYA. Pyrrolidone carboxylic acid is present on glutamine 26. Alanine amide is present on alanine 35. A propeptide spanning residues 39–106 is cleaved from the precursor; that stretch reads SLAEAAQSTG…GLPLFSNGHL (68 aa).

Belongs to the AKH/HRTH/RPCH family. In terms of tissue distribution, only expressed in the head and thorax body segments of adults. Is more expressed in adult males than in females.

It localises to the secreted. Its function is as follows. Neuropeptide with neuromodulator or neurotransmitter role that activates the adipokinetic hormone/corazonin-related peptide receptor (ACPR). May function in regulation of post-ecdysis activities. Does not activate the A.gambiae adipokinetic hormone (AKH) and corazonin (CRZ) receptors. The polypeptide is Adipokinetic hormone/corazonin-related peptide (Aedes aegypti (Yellowfever mosquito)).